We begin with the raw amino-acid sequence, 414 residues long: Gamma-glutamyl phosphate reductase (414 aa).

This sequence belongs to the gamma-glutamyl phosphate reductase family.

The protein resides in the cytoplasm. It catalyses the reaction L-glutamate 5-semialdehyde + phosphate + NADP(+) = L-glutamyl 5-phosphate + NADPH + H(+). Its pathway is amino-acid biosynthesis; L-proline biosynthesis; L-glutamate 5-semialdehyde from L-glutamate: step 2/2. Functionally, catalyzes the NADPH-dependent reduction of L-glutamate 5-phosphate into L-glutamate 5-semialdehyde and phosphate. The product spontaneously undergoes cyclization to form 1-pyrroline-5-carboxylate. The protein is Gamma-glutamyl phosphate reductase of Xanthomonas campestris pv. campestris (strain ATCC 33913 / DSM 3586 / NCPPB 528 / LMG 568 / P 25).